The primary structure comprises 493 residues: GPI alpha-1,6-mannosyltransferase 2 (493 aa).

The Cytoplasmic segment spans residues Met-1 to Arg-13. The helical transmembrane segment at Phe-14–Pro-34 threads the bilayer. The Lumenal segment spans residues Asp-35–His-77. Residues Gly-78–Gly-98 form a helical membrane-spanning segment. Residues Thr-99–Ser-113 are Cytoplasmic-facing. Residues Cys-114–Leu-134 traverse the membrane as a helical segment. At His-135–Asp-136 the chain is on the lumenal side. A helical membrane pass occupies residues Leu-137–Leu-157. Over Ser-158 to Asn-161 the chain is Cytoplasmic. The chain crosses the membrane as a helical span at residues Val-162–Gly-182. Residues Gln-183 to Ser-192 are Lumenal-facing. A helical transmembrane segment spans residues Val-193–Leu-213. The Cytoplasmic segment spans residues Met-214–Leu-234. Residues Phe-235–Phe-255 form a helical membrane-spanning segment. Residues Gln-256 to Asn-327 lie on the Lumenal side of the membrane. The helical transmembrane segment at Phe-328–Thr-348 threads the bilayer. Residues His-349–Gln-378 are Cytoplasmic-facing. A helical membrane pass occupies residues Val-379–Val-399. The Lumenal segment spans residues Gln-400–Arg-469. Residues Tyr-470–Leu-490 form a helical membrane-spanning segment. Topologically, residues Pro-491–Thr-493 are cytoplasmic.

This sequence belongs to the PIGV family. Not N-glycosylated.

The protein resides in the endoplasmic reticulum membrane. The protein operates within glycolipid biosynthesis; glycosylphosphatidylinositol-anchor biosynthesis. Alpha-1,6-mannosyltransferase that catalyzes the transfer of the second mannose, via an alpha-1,6 bond, from a dolichol-phosphate-mannose (Dol-P-Man) to the alpha-D-Man-(1-&gt;4)-alpha-D-GlcN-(1-&gt;6)-(1-radyl,2-acyl-sn-glycero-3-phospho)-2-acyl-inositol (also termed H2) intermediate to generate an alpha-D-Man-(1-&gt;6)-alpha-D-Man-(1-&gt;4)-alpha-D-GlcN-(1-&gt;6)-(1-radyl,2-acyl-sn-glycero-3-phospho)-2-acyl-inositol (also termed H3) and participates in the seventh step of the glycosylphosphatidylinositol-anchor biosynthesis. Also transfers the second mannose on a 2-PEtn-alpha-D-Man-(1-&gt;4)-alpha-D-GlcN-(1-&gt;6)-(1-radyl,2-acyl-sn-glycero-3-phospho)-2-acyl-inositol (also termed H5). In Homo sapiens (Human), this protein is GPI alpha-1,6-mannosyltransferase 2.